The chain runs to 812 residues: Probable beta-glucosidase D (812 aa).

An N-terminal signal peptide occupies residues 1–18 (MRVPSLSVLSFLLGTALA). Residues N53 and N188 are each glycosylated (N-linked (GlcNAc...) asparagine). Positions 186 to 248 (ETNRTGGMGG…GMGGGMAGSS (63 aa)) are disordered. A compositionally biased stretch (gly residues) spans 191 to 207 (GGMGGGGGAPGGGGMGR). Positions 211 to 225 (FSSSVPGGMSPTSSA) are enriched in polar residues. The segment covering 236–245 (GGSGMGGGMA) has biased composition (gly residues). An N-linked (GlcNAc...) asparagine glycan is attached at N296. D324 is a catalytic residue. Residues N360, N384, N422, N501, N592, and N646 are each glycosylated (N-linked (GlcNAc...) asparagine).

The protein belongs to the glycosyl hydrolase 3 family.

The protein resides in the secreted. It catalyses the reaction Hydrolysis of terminal, non-reducing beta-D-glucosyl residues with release of beta-D-glucose.. It participates in glycan metabolism; cellulose degradation. In terms of biological role, beta-glucosidases are one of a number of cellulolytic enzymes involved in the degradation of cellulosic biomass. Catalyzes the last step releasing glucose from the inhibitory cellobiose. The sequence is that of Probable beta-glucosidase D (bglD) from Emericella nidulans (strain FGSC A4 / ATCC 38163 / CBS 112.46 / NRRL 194 / M139) (Aspergillus nidulans).